The following is a 173-amino-acid chain: Development-specific protein S (173 aa).

2 consecutive Beta/gamma crystallin 'Greek key' domains span residues 2–46 and 48–86; these read ANIT…KVPP and VKAILYQNDGFAGDQIEVVANAEELGPLNNNVSSIRVIS. Ca(2+)-binding residues include tyrosine 8, asparagine 37, threonine 38, serine 40, glutamine 54, asparagine 77, asparagine 78, and serine 80. Positions 87–90 are connecting peptide; sequence VPVQ. Beta/gamma crystallin 'Greek key' domains follow at residues 91-135 and 136-173; these read PRAR…KPQG and LAVVLFKNDNFSGDTLPVNSDAPTLGAMNNNTSSIRIS.

This sequence belongs to the beta/gamma-crystallin family.

In terms of biological role, protein S, induced in large amounts during fruiting body formation, assembles on the surface of myxospores in the presence of calcium ions. In Myxococcus xanthus, this protein is Development-specific protein S (tps).